The sequence spans 421 residues: Replication factor C large subunit (421 aa).

63-70 provides a ligand contact to ATP; sequence GPPGIGKT.

This sequence belongs to the activator 1 small subunits family. RfcL subfamily. As to quaternary structure, heteromultimer composed of small subunits (RfcS) and large subunits (RfcL).

Its function is as follows. Part of the RFC clamp loader complex which loads the PCNA sliding clamp onto DNA. This is Replication factor C large subunit from Pyrobaculum calidifontis (strain DSM 21063 / JCM 11548 / VA1).